The chain runs to 195 residues: Flavin-dependent monooxygenase, reductase subunit HsaB (195 aa).

Residues 42–46 (PVGFA), 48–49 (QS), 63–65 (CPT), 69–70 (RS), and 95–96 (RF) contribute to the FAD site. 160–163 (FYRG) serves as a coordination point for NAD(+).

This sequence belongs to the non-flavoprotein flavin reductase family. In terms of assembly, hsaAB monooxygenase consists of an oxygenase component HsaA and a reductase component HsaB.

The enzyme catalyses a reduced flavin + NAD(+) = an oxidized flavin + NADH + 2 H(+). It functions in the pathway lipid metabolism; steroid biosynthesis. Its function is as follows. Catalyzes the reduction of free flavins (FMN or FAD) by NADH. Subsequently, the reduced flavins diffuse to the HsaA oxygenase subunit. The protein is Flavin-dependent monooxygenase, reductase subunit HsaB (hsaB) of Rhodococcus jostii (strain RHA1).